The following is a 524-amino-acid chain: L-lactate permease (524 aa).

The next 13 membrane-spanning stretches (helical) occupy residues 12-34, 38-60, 67-89, 127-149, 156-178, 193-215, 224-246, 250-267, 297-319, 339-361, 374-396, 411-433, and 505-522; these read LAVS…TVFK, IQAA…HLPF, IVQG…VWLY, LEGA…SLGF, MLCL…VGII, SMMT…IWLM, ILPA…TIFI, LADI…ALFL, WSPF…KGLL, IEVG…VTTV, SLLK…IIGI, EAVA…IGVF, and YSFG…ILSL.

It belongs to the lactate permease family.

It localises to the cell membrane. In terms of biological role, may play a role in L-lactate transport. The sequence is that of L-lactate permease (lctP) from Halalkalibacterium halodurans (strain ATCC BAA-125 / DSM 18197 / FERM 7344 / JCM 9153 / C-125) (Bacillus halodurans).